We begin with the raw amino-acid sequence, 150 residues long: MPIWVDADACPLPVKEILYRAAHRAQVVTTLVANQGLRVPPSPYIKTQQVEKGFDVADHVIAQQVIPGDLVITGDIPLASWVIDAGGEALNPRGEIYTRETIQARLGMRNFMEELRSAGVQTGGPAPFNAADKQRFANALDKWLLKGKLS.

This sequence belongs to the UPF0178 family.

The sequence is that of UPF0178 protein ASA_3749 from Aeromonas salmonicida (strain A449).